Reading from the N-terminus, the 227-residue chain is MMLHIPGVLTKEQVAQCRDILDAADWTDGNATSGAQSALAKRNRQLPEGSPAARAAGDAIQDALARNALFFSAALPLKVFPPLFNRYAGGDAFGTHVDNAIRLLRGTDFRVRSDLSATLFLEEPEHYDGGELCVEDTYGVHRAKLPAGDMVLYPASSLHHVTPVTRGARVASFFWIQSMVRDDADRTLLYQLDTQIQRLTAEKGGRDASVIALTGIYHNLLRRWADA.

One can recognise a Fe2OG dioxygenase domain in the interval 78–178; sequence KVFPPLFNRY…RVASFFWIQS (101 aa). Fe cation is bound by residues H96, D98, and H159. 2-oxoglutarate is bound at residue R169.

It depends on Fe(2+) as a cofactor. L-ascorbate is required as a cofactor.

This chain is PKHD-type hydroxylase BURPS668_A1690, found in Burkholderia pseudomallei (strain 668).